The sequence spans 729 residues: DNA topoisomerase 3 (729 aa).

Positions 3–136 constitute a Toprim domain; it reads KKAVLAEKPS…VKRLWISSVT (134 aa). Mg(2+)-binding residues include Glu9 and Asp105. One can recognise a Topo IA-type catalytic domain in the interval 153-590; sequence YETLYAAAAA…EMKEYAKAVV (438 aa). The tract at residues 187-192 is interaction with DNA; it reads SCGRVQ. Residue Tyr311 is the O-(5'-phospho-DNA)-tyrosine intermediate of the active site. The segment at 680-708 is disordered; sequence FEQRRKQNKHKNVSKREVQSYMKKQNKQD.

This sequence belongs to the type IA topoisomerase family. It depends on Mg(2+) as a cofactor.

The enzyme catalyses ATP-independent breakage of single-stranded DNA, followed by passage and rejoining.. In terms of biological role, releases the supercoiling and torsional tension of DNA, which is introduced during the DNA replication and transcription, by transiently cleaving and rejoining one strand of the DNA duplex. Introduces a single-strand break via transesterification at a target site in duplex DNA. The scissile phosphodiester is attacked by the catalytic tyrosine of the enzyme, resulting in the formation of a DNA-(5'-phosphotyrosyl)-enzyme intermediate and the expulsion of a 3'-OH DNA strand. The free DNA strand then undergoes passage around the unbroken strand, thus removing DNA supercoils. Finally, in the religation step, the DNA 3'-OH attacks the covalent intermediate to expel the active-site tyrosine and restore the DNA phosphodiester backbone. This chain is DNA topoisomerase 3, found in Shouchella clausii (strain KSM-K16) (Alkalihalobacillus clausii).